A 445-amino-acid polypeptide reads, in one-letter code: MPVGRSLSLDPNLLAQLQSHSPTLWLNPHQGMPLPDFAPTAADLADADARLRRCAGLLAELFAELRLSGGLIASPLQPAEPLKRAARAGHAQAGAWYVKRDDALPVAGSIKARGGFHEVLALAESIAERHGLAGADTDRRALASGAARARFARHTVMVGSTGNLGLSIGMLASALGFRTVVHMSADAKAWKKARLRTRGVEVVEHAGDYAKAVDAGRRQAAGMPCCHFVDDEGSRMLFLGYATAAAELAAQLAQAGRPVDARHPLFVHLPCGVGGAPGGIVYGLKALYGEHVHAFVAEPTASPCVLVQLAGDAAHPRSVYDIGLDNRTEADGLAVAQASPLAAALLRAQAAGAFTVDDRQLFAHLLDARERLGIDLEPSAAAAFGGPAWIAGSDAGRAYLRGRGIDPDAATHVIWATGGSLVPAQEHRRFQAHARAQRQVGGAGA.

Residue lysine 111 is modified to N6-(pyridoxal phosphate)lysine.

The protein belongs to the serine/threonine dehydratase family. DsdA subfamily. Pyridoxal 5'-phosphate serves as cofactor.

The catalysed reaction is D-serine = pyruvate + NH4(+). This is Probable D-serine dehydratase from Burkholderia pseudomallei (strain 668).